We begin with the raw amino-acid sequence, 187 residues long: Phosphatidylethanolamine-binding protein 1 (187 aa).

An N-acetylalanine; in peptide hippocampal cholinergic neurostimulating modification is found at alanine 2. Residues serine 6 and serine 13 each carry the phosphoserine modification. Threonine 42 is modified (phosphothreonine). Residues serine 52, serine 54, serine 98, and serine 153 each carry the phosphoserine modification. Positions 93–134 are interaction with RAF1; that stretch reads KGNDISSGTVLSEYVGSGPPKDTGLHRYVWLVYEQEQPLNCD.

The protein belongs to the phosphatidylethanolamine-binding protein family. As to quaternary structure, has a tendency to form dimers by disulfide cross-linking. Interacts with RAF1 and this interaction is enhanced if RAF1 is phosphorylated on residues 'Ser-338', 'Ser-339', 'Tyr-340' and 'Tyr-341'. Interacts with ALOX15; in response to IL13/interleukin-13, prevents the interaction of PEBP1 with RAF1 to activate the ERK signaling cascade. In terms of tissue distribution, major component of epididymal secretions and sperm plasma membranes. It is present in cytosols from a variety of other tissues. Highly expressed in brain.

The protein localises to the cytoplasm. Its subcellular location is the membrane. Functionally, binds ATP, opioids and phosphatidylethanolamine. Has lower affinity for phosphatidylinositol and phosphatidylcholine. Serine protease inhibitor which inhibits thrombin, neuropsin and chymotrypsin but not trypsin, tissue type plasminogen activator and elastase. Inhibits the kinase activity of RAF1 by inhibiting its activation and by dissociating the RAF1/MEK complex and acting as a competitive inhibitor of MEK phosphorylation. Its function is as follows. HCNP may be involved in the function of the presynaptic cholinergic neurons of the central nervous system. HCNP increases the production of choline acetyltransferase but not acetylcholinesterase. Seems to be mediated by a specific receptor. The protein is Phosphatidylethanolamine-binding protein 1 (Pebp1) of Rattus norvegicus (Rat).